The sequence spans 331 residues: 6-phosphogluconolactonase (331 aa).

It belongs to the cycloisomerase 2 family.

It carries out the reaction 6-phospho-D-glucono-1,5-lactone + H2O = 6-phospho-D-gluconate + H(+). It participates in carbohydrate degradation; pentose phosphate pathway; D-ribulose 5-phosphate from D-glucose 6-phosphate (oxidative stage): step 2/3. Its function is as follows. Catalyzes the hydrolysis of 6-phosphogluconolactone to 6-phosphogluconate. The polypeptide is 6-phosphogluconolactonase (Klebsiella pneumoniae (strain 342)).